The chain runs to 310 residues: Mitochondrial 2-oxodicarboxylate carrier 1 (310 aa).

6 consecutive transmembrane segments (helical) span residues 9 to 29 (LPFIYQFTAGAIAGVSELLVM), 78 to 97 (SHLYKGITSPILMEAPKRAI), 126 to 146 (IYSGASAGAVEAFVVAPFELV), 179 to 199 (GLEATIWRHVLWNAGYFGIIF), 219 to 239 (LIAGAIGGTVGCLLNTPFDVV), and 281 to 301 (MRLAPGGGLLLVVFTNVMDFF). Solcar repeat units follow at residues 9 to 108 (LPFI…FQTF), 120 to 204 (MTQK…IRKL), and 213 to 300 (EKTR…VMDF).

The protein belongs to the mitochondrial carrier (TC 2.A.29) family.

It is found in the mitochondrion inner membrane. Transports C5-C7 oxodicarboxylates across the inner membranes of mitochondria. Can transport 2-oxoadipate, 2-oxoglutarate, adipate, glutarate, 2-oxopimelate, oxaloacetate, citrate and malate. The main physiological role is probably to supply 2-oxoadipate and 2-oxoglutarate from the mitochondrial matrix to the cytosol where they are used in the biosynthesis of lysine and glutamate, respectively, and in lysine catabolism. This chain is Mitochondrial 2-oxodicarboxylate carrier 1 (ODC1), found in Saccharomyces cerevisiae (strain ATCC 204508 / S288c) (Baker's yeast).